Here is a 199-residue protein sequence, read N- to C-terminus: MSNLENLTSKIIEDANKEAEELLSEAKKEENKIVDEKVKKGNKAKEQIIEKSKREAKTKAERIISNTHLKIRNNKLEAKQEMINKVFDEAVIKLQNLSKDEYLDFVKSSILSLDIEGDEEIIISPNDKDKMDVNFMLTLNNKLKAKGKKGLLKISNENRNIKGGFILYKNGIEINNSFEALVDSLRDELEQEIIEALFS.

The protein belongs to the V-ATPase E subunit family.

Its function is as follows. Produces ATP from ADP in the presence of a proton gradient across the membrane. The polypeptide is V-type ATP synthase subunit E (Clostridium botulinum (strain Hall / ATCC 3502 / NCTC 13319 / Type A)).